A 288-amino-acid polypeptide reads, in one-letter code: uncharacterized protein (288 aa).

A compositionally biased stretch (basic and acidic residues) spans 1 to 12 (MTEGRCAQHPDG). The segment at 1–20 (MTEGRCAQHPDGLDVQDVCD) is disordered.

This sequence belongs to the class IV-like SAM-binding methyltransferase superfamily. RNA methyltransferase TrmH family.

This is an uncharacterized protein from Mycobacterium bovis (strain ATCC BAA-935 / AF2122/97).